A 367-amino-acid chain; its full sequence is Aminomethyltransferase (367 aa).

Belongs to the GcvT family. In terms of assembly, the glycine cleavage system is composed of four proteins: P, T, L and H.

It carries out the reaction N(6)-[(R)-S(8)-aminomethyldihydrolipoyl]-L-lysyl-[protein] + (6S)-5,6,7,8-tetrahydrofolate = N(6)-[(R)-dihydrolipoyl]-L-lysyl-[protein] + (6R)-5,10-methylene-5,6,7,8-tetrahydrofolate + NH4(+). In terms of biological role, the glycine cleavage system catalyzes the degradation of glycine. The polypeptide is Aminomethyltransferase (Shouchella clausii (strain KSM-K16) (Alkalihalobacillus clausii)).